A 500-amino-acid chain; its full sequence is Na(+)/H(+) antiporter NhaB (500 aa).

12 helical membrane-spanning segments follow: residues Phe-28–Gly-50, Gly-68–Ala-88, Leu-98–Phe-118, Leu-121–Leu-141, Phe-145–Val-165, Leu-205–Pro-225, Gln-244–Glu-264, Ala-301–Leu-318, Phe-350–Ile-370, Met-394–Ile-414, Val-449–Leu-469, and Met-477–Ser-497.

Belongs to the NhaB Na(+)/H(+) (TC 2.A.34) antiporter family.

The protein localises to the cell inner membrane. The enzyme catalyses 2 Na(+)(in) + 3 H(+)(out) = 2 Na(+)(out) + 3 H(+)(in). Functionally, na(+)/H(+) antiporter that extrudes sodium in exchange for external protons. This chain is Na(+)/H(+) antiporter NhaB, found in Pseudomonas paraeruginosa (strain DSM 24068 / PA7) (Pseudomonas aeruginosa (strain PA7)).